The primary structure comprises 664 residues: MDNKLEKMKELVEELNQYAYEYYVLDNPSISDKEYDLKYDELVILEKKTEVTLPYSPTQRVGDKILGEFSKYTHKGRLWSLDKAQNMEQLIEWHNRNLKVIEQYNSMSEDKLPELRYIVTKKFDGLTVNCTYDENGILIKSATRGTGIIGEDITAQIKTIKTVPLKIKNNHIIEVHGEAIMTKTAFEEYNKAAQVPLKNLRNGAAGALRNLDIKETARRNLSAFFYDVGYNEGSEFKNYREMMNFIRNMGLPQDKYIKECTNMEEVEKEIEYIESIREELDYDIDGAVIVVDDIKTREILGYTIKFPKWAIAYKFEAKEITTRLLDVEWNVGRSGRVTPTALLEPVELGGVTVKRATLNNMDDIKRKNVKLGAKVLVRRSNDVIPEIMGVAEESLEESKEIQAPDRCPYCNSHLVQNGVHYYCENTLSCKPQMVKSIVHFASREAMNIAGFSEKTAEQLFEKLDIKSIADLYKIKKEELLTLEKFKDKKSQNLINAIQNSKNCDLASFIYALGIPNVGKKTANDLVMKFKTLESIKNTTIEQLVEVPDVGEIVAKSIYDFFEDEKIISNIEELLNLGVKPYYEEERIDENPFMDKTIVVTGSLNNYSRGEIKDKLQSLGAKVSSSVSKNTDYVLVGEKPGSKYEKAIELGVKVINEEEFSNKIK.

Residues 32–36 (DKEYD) and 80–81 (SL) each bind NAD(+). Catalysis depends on K122, which acts as the N6-AMP-lysine intermediate. Residues R144, E178, and K314 each contribute to the NAD(+) site. Residues C407, C410, C423, and C429 each coordinate Zn(2+). The 78-residue stretch at 587 to 664 (IDENPFMDKT…NEEEFSNKIK (78 aa)) folds into the BRCT domain.

The protein belongs to the NAD-dependent DNA ligase family. LigA subfamily. It depends on Mg(2+) as a cofactor. Mn(2+) serves as cofactor.

It catalyses the reaction NAD(+) + (deoxyribonucleotide)n-3'-hydroxyl + 5'-phospho-(deoxyribonucleotide)m = (deoxyribonucleotide)n+m + AMP + beta-nicotinamide D-nucleotide.. Its function is as follows. DNA ligase that catalyzes the formation of phosphodiester linkages between 5'-phosphoryl and 3'-hydroxyl groups in double-stranded DNA using NAD as a coenzyme and as the energy source for the reaction. It is essential for DNA replication and repair of damaged DNA. The protein is DNA ligase of Clostridium botulinum (strain Loch Maree / Type A3).